The chain runs to 124 residues: Late histone H2B.2.2 (124 aa).

The disordered stretch occupies residues 1 to 32; sequence MPAKQTSGKGAKKAGKAKGRPSGASKTRRRKR. Residues 10-19 are compositionally biased toward basic residues; it reads GAKKAGKAKG. Residue S111 is glycosylated (O-linked (GlcNAc) serine). K119 participates in a covalent cross-link: Glycyl lysine isopeptide (Lys-Gly) (interchain with G-Cter in ubiquitin).

It belongs to the histone H2B family. The nucleosome is a histone octamer containing two molecules each of H2A, H2B, H3 and H4 assembled in one H3-H4 heterotetramer and two H2A-H2B heterodimers. The octamer wraps approximately 147 bp of DNA. Post-translationally, monoubiquitination of Lys-119 gives a specific tag for epigenetic transcriptional activation and is also prerequisite for histone H3 'Lys-4' and 'Lys-79' methylation. In terms of processing, glcNAcylation at Ser-111 promotes monoubiquitination of Lys-119. It fluctuates in response to extracellular glucose, and associates with transcribed genes.

It is found in the nucleus. Its subcellular location is the chromosome. Its function is as follows. Core component of nucleosome. Nucleosomes wrap and compact DNA into chromatin, limiting DNA accessibility to the cellular machineries which require DNA as a template. Histones thereby play a central role in transcription regulation, DNA repair, DNA replication and chromosomal stability. DNA accessibility is regulated via a complex set of post-translational modifications of histones, also called histone code, and nucleosome remodeling. This is Late histone H2B.2.2 from Psammechinus miliaris (Green sea urchin).